The primary structure comprises 542 residues: Esterase 6 (542 aa).

The N-terminal stretch at 1 to 19 is a signal peptide; sequence MNYVGLIIVLSCLWLGSNA. Asparagine 40 carries an N-linked (GlcNAc...) asparagine glycan. Cysteines 84 and 103 form a disulfide. Serine 207 functions as the Acyl-ester intermediate in the catalytic mechanism. Cysteine 259 and cysteine 271 are disulfide-bonded. Residues asparagine 418 and asparagine 454 are each glycosylated (N-linked (GlcNAc...) asparagine). The active-site Charge relay system is the histidine 464. A disulfide bond links cysteine 512 and cysteine 533.

The protein belongs to the type-B carboxylesterase/lipase family. Monomer.

The protein localises to the secreted. The enzyme catalyses a carboxylic ester + H2O = an alcohol + a carboxylate + H(+). Functionally, transferred from the ejaculatory bulbs of males to the female genitals upon copulation, plays an important role in the reproductive biology. In Drosophila simulans (Fruit fly), this protein is Esterase 6 (Est-6).